The sequence spans 166 residues: Phospholipase A2 inhibitor (166 aa).

The first 19 residues, 1–19 (MRLILLSGLLLLGIFLANG), serve as a signal peptide directing secretion. A C-type lectin domain is found at 46–161 (LKGSFLIVHK…CDDNLLVVCE (116 aa)). 2 disulfide bridges follow: Cys-83–Cys-160 and Cys-138–Cys-152. The N-linked (GlcNAc...) asparagine glycan is linked to Asn-122.

The protein belongs to the alpha-type phospholipase A2 inhibitor family. Homotrimer; non-covalently linked. In terms of tissue distribution, expressed by the liver.

It localises to the secreted. In terms of biological role, this phospholipase A2 inhibitor binds directly phospholipase A2 in the presence or absence of calcium. This is Phospholipase A2 inhibitor from Bothrops jararacussu (Jararacussu).